The primary structure comprises 310 residues: tRNA pseudouridine synthase B (310 aa).

D37 functions as the Nucleophile in the catalytic mechanism.

The protein belongs to the pseudouridine synthase TruB family. Type 1 subfamily.

It carries out the reaction uridine(55) in tRNA = pseudouridine(55) in tRNA. In terms of biological role, responsible for synthesis of pseudouridine from uracil-55 in the psi GC loop of transfer RNAs. This chain is tRNA pseudouridine synthase B, found in Deinococcus deserti (strain DSM 17065 / CIP 109153 / LMG 22923 / VCD115).